The sequence spans 147 residues: MYQAIPYSSTRPWLRPEPAASVVDVVKVETTTAVAGRGGEAEVVGEEEAAEVRRAVAESPVLVVGRRGCCLIHVVKRLLQGLGVNPAVHEVAGEAALKGVVPAGGEAAALPAVFVGGKLLGGLDRLMAVHISGELVPILKKAGALWL.

Residues 49-146 (AAEVRRAVAE…PILKKAGALW (98 aa)) form the Glutaredoxin domain. Residue Cys-69 coordinates [2Fe-2S] cluster. The short motif at 144–147 (ALWL) is the Responsive for interaction with TGA factors element.

It belongs to the glutaredoxin family. CC-type subfamily.

The protein localises to the cytoplasm. It is found in the nucleus. Functionally, may only reduce GSH-thiol disulfides, but not protein disulfides. The polypeptide is Monothiol glutaredoxin-S5 (GRXS5) (Oryza sativa subsp. japonica (Rice)).